Consider the following 165-residue polypeptide: Fibrinogen-binding protein (165 aa).

A signal peptide spans 1–29 (MKNKLIAKSLLAIAAIGITTTTIASTADA).

As to quaternary structure, interacts with host fibrinogen alpha chain/FGA. Interacts with host complement protein C3.

The protein localises to the secreted. Extracellular fibrinogen-binding protein that plays an important role in virulence. By interacting with the alpha chain of fibrinogen and its derivative fibrin, enhances a non-functional interaction between fibrinogen and platelets and is responsible for repression of fibrinogen-dependent platelet aggregation. In addition, assembles a fibrinogen protective shield around the bacteria which results in impaired phagocytic clearance by the host. Mechanistically, interacts with host complement C3b deposited on the surface of the bacterium via its C-terminal and then recruits fibrinogen via its N-terminal. The protein is Fibrinogen-binding protein (fib) of Staphylococcus aureus (strain MRSA252).